The following is a 288-amino-acid chain: Lysosomal thioesterase PPT2 homolog (288 aa).

The N-terminal stretch at 1–22 (MRLRLQVLVALLTCSSISVSLA) is a signal peptide. Ser-98 serves as the catalytic Nucleophile. An N-linked (GlcNAc...) asparagine glycan is attached at Asn-192. Catalysis depends on residues Asp-214 and His-269.

It belongs to the palmitoyl-protein thioesterase family. Expressed in adult head and crop.

Its subcellular location is the lysosome. It catalyses the reaction hexadecanoyl-CoA + H2O = hexadecanoate + CoA + H(+). The enzyme catalyses S-hexadecanoyl-N-acetylcysteamine + H2O = N-acetylcysteamine + hexadecanoate + H(+). Functionally, catalyzes the cleavage of thioester bonds from S-palmitoyl-CoA or S-palmitoyl-N-acetylcysteamine (unbranched structures) but does not have activity against palmitoylcysteine or palmitoylated proteins, branched structures or bulky head groups. Conversely, hydrolyzes both long and short chain fatty acyl-CoA substrate. In Drosophila melanogaster (Fruit fly), this protein is Lysosomal thioesterase PPT2 homolog (Ppt2).